A 158-amino-acid chain; its full sequence is Flagellar assembly factor FliW (158 aa).

It belongs to the FliW family. Interacts with translational regulator CsrA and flagellin(s).

Its subcellular location is the cytoplasm. Acts as an anti-CsrA protein, binds CsrA and prevents it from repressing translation of its target genes, one of which is flagellin. Binds to flagellin and participates in the assembly of the flagellum. In Moorella thermoacetica (strain ATCC 39073 / JCM 9320), this protein is Flagellar assembly factor FliW.